The sequence spans 51 residues: Insulin (51 aa).

3 cysteine pairs are disulfide-bonded: C7–C37, C19–C50, and C36–C41.

It belongs to the insulin family. Heterodimer of a B chain and an A chain linked by two disulfide bonds.

The protein resides in the secreted. Insulin decreases blood glucose concentration. It increases cell permeability to monosaccharides, amino acids and fatty acids. It accelerates glycolysis, the pentose phosphate cycle, and glycogen synthesis in liver. In Acomys cahirinus (Cairo spiny mouse), this protein is Insulin (INS).